The following is a 73-amino-acid chain: Homeodomain-only protein (73 aa).

The segment at residues 3–62 (TEKSVTPTEEQLEILEYNFCKVNKHPDPTTLCLIAAETGLSEEQTLKWFKQRLAEWRKSE) is a DNA-binding region (homeobox; degenerate).

Its subcellular location is the nucleus. It is found in the cytoplasm. Its function is as follows. Atypical homeodomain protein which does not bind DNA and is required to modulate cardiac growth and development. May act via an interaction with SRF, leading to modulate the expression of SRF-dependent cardiac-specific genes and cardiac development. May act as a co-chaperone for HSPA1A and HSPA1B chaperone proteins and assist in chaperone-mediated protein refolding. This chain is Homeodomain-only protein (HOPX), found in Gallus gallus (Chicken).